A 1684-amino-acid polypeptide reads, in one-letter code: MEDLVQDGVASPATPGTGKSKLETLPKEDLIKFAKKQMMLIQKAKSRCTELEKEIEELRSKPVTEGTGDIIKALTERLDALLLEKAETEQQCLSLKKENIKMKQEVEDSVTKMGDAHKELEQSHINYVKEIENLKNELMAVRSKYSEDKANLQKQLEEAMNTQLELSEQLKFQNNSEDNVKKLQEEIEKIRPGFEEQILYLQKQLDATTDEKKETVTQLQNIIEANSQHYQKNINSLQEELLQLKAIHQEEVKELMCQIEASAKEHEAEINKLNELKENLVKQCEASEKNIQKKYECELENLRKATSNANQDNQICSILLQENTFVEQVVNEKVKHLEDTLKELESQHSILKDEVTYMNNLKLKLEMDAQHIKDEFFHEREDLEFKINELLLAKEEQGCVIEKLKSELAGLNKQFCYTVEQHNREVQSLKEQHQKEISELNETFLSDSEKEKLTLMFEIQGLKEQCENLQQEKQEAILNYESLREIMEILQTELGESAGKISQEFESMKQQQASDVHELQQKLRTAFTEKDALLETVNRLQGENEKLLSQQELVPELENTIKNLQEKNGVYLLSLSQRDTMLKELEGKINSLTEEKDDFINKLKNSHEEMDNFHKKCEREERLILELGKKVEQTIQYNSELEQKVNELTGGLEETLKEKDQNDQKLEKLMVQMKVLSEDKEVLSAEVKSLYEENNKLSSEKKQLSRDLEVFLSQKEDVILKEHITQLEKKLQLMVEEQDNLNKLLENEQVQKLFVKTQLYGFLKEMGSEVSEDSEEKDVVNVLQAVGESLAKINEEKCNLAFQRDEKVLELEKEIKCLQEESVVQCEELKSLLRDYEQEKVLLRKELEEIQSEKEALQSDLLEMKNANEKTRLENQNLLIQVEEVSQTCSKSEIHNEKEKCFIKEHENLKPLLEQKELRDRRAELILLKDSLAKSPSVKNDPLSSVKELEEKIENLEKECKEKEEKINKIKLVAVKAKKELDSSRKETQTVKEELESLRSEKDQLSASMRDLIQGAESYKNLLLEYEKQSEQLDVEKERANNFEHRIEDLTRQLRNSTLQCETINSDNEDLLARIETLQSNAKLLEVQILEVQRAKAMVDKELEAEKLQKEQKIKEHATTVNELEELQVQLQKQKKQLQKTMQELELVKKDAQQTTLMNMEIADYERLMKELNQKLTNKNNKIEDLEQEIKIQKQKQETLQEEITSLQSSVQQYEEKNTKIKQLLVKTKKELADSKQAETDHLILQASLKGELEASQQQVEVYKIQLAEITSEKHKIHEHLKTSAEQHQRTLSAYQQRVTALQEECRAAKAEQATVTSEFESYKVRVHNVLKQQKNKSMSQAETEGAKQEREHLEMLIDQLKIKLQDSQNNLQINVSELQTLQSEHDTLLERHNKMLQETVSKEAELREKLCSIQSENMMMKSEHTQTVSQLTSQNEVLRNSFRDQVRHLQEEHRKTVETLQQQLSKMEAQLFQLKNEPTTRSPVSSQQSLKNLRERRNTDLPLLDMHTVTREEGEGMETTDTESVSSASTYTQSLEQLLNSPETKLEPPLWHAEFTKEELVQKLSSTTKSADHLNGLLRETEATNAILMEQIKLLKSEIRRLERNQEREKSAANLEYLKNVLLQFIFLKPGSERERLLPVINTMLQLSPEEKGKLAAVAQGEEENASRSSGWASYLHSWSGLR.

Met1 is subject to N-acetylmethionine. The segment at 1–22 (MEDLVQDGVASPATPGTGKSKL) is disordered. The residue at position 11 (Ser11) is a Phosphoserine. Position 14 is a phosphothreonine (Thr14). The stretch at 110–1618 (VTKMGDAHKE…REKSAANLEY (1509 aa)) forms a coiled coil. Phosphoserine is present on residues Ser236, Ser1483, and Ser1487. Residues 1475-1502 (LKNEPTTRSPVSSQQSLKNLRERRNTDL) are disordered. The segment covering 1477–1492 (NEPTTRSPVSSQQSLK) has biased composition (polar residues). The segment at 1574–1613 (HLNGLLRETEATNAILMEQIKLLKSEIRRLERNQEREKSA) is mediates interaction with RAB6A. Residues 1574 to 1684 (HLNGLLRETE…SYLHSWSGLR (111 aa)) form a mediates interaction with RAB9A region. One can recognise a GRIP domain in the interval 1609–1659 (REKSAANLEYLKNVLLQFIFLKPGSERERLLPVINTMLQLSPEEKGKLAAV).

As to quaternary structure, homodimer. Interacts (via GRIP domain) with RAB6A (preferentially in its GTP-bound form). May interact (RAB6A-dependent) with ARL1; according to PubMed:19703403, RAB6A and ARL1 are not involved in GCC2 Golgi localization as proposed by PubMed:18243103. Interacts (probably via GRIP domain) with RAB9A (preferentially in its GTP-bound form). Interacts with CLASP1 and CLASP2; recruits both proteins to membranes of the TGN. Interacts with STX16. As to expression, ubiquitous.

It is found in the cytoplasm. Its subcellular location is the golgi apparatus. The protein localises to the trans-Golgi network membrane. Golgin which probably tethers transport vesicles to the trans-Golgi network (TGN) and regulates vesicular transport between the endosomes and the Golgi. As a RAB9A effector it is involved in recycling of the mannose 6-phosphate receptor from the late endosomes to the TGN. May also play a role in transport between the recycling endosomes and the Golgi. Required for maintenance of the Golgi structure, it is involved in the biogenesis of noncentrosomal, Golgi-associated microtubules through recruitment of CLASP1 and CLASP2. In Homo sapiens (Human), this protein is GRIP and coiled-coil domain-containing protein 2 (GCC2).